The chain runs to 498 residues: GTPase Der (498 aa).

2 consecutive EngA-type G domains span residues 3-166 (PVVA…FEEL) and 212-385 (IKFA…RSAT). GTP-binding positions include 9–16 (GRPNVGKS), 56–60 (DTGGI), 118–121 (NKTD), 218–225 (GRPNVGKS), 265–269 (DTAGV), and 330–333 (NKWD). In terms of domain architecture, KH-like spans 386-470 (KRISTSMLTR…PIHIEFQEGD (85 aa)).

The protein belongs to the TRAFAC class TrmE-Era-EngA-EngB-Septin-like GTPase superfamily. EngA (Der) GTPase family. In terms of assembly, associates with the 50S ribosomal subunit.

Its function is as follows. GTPase that plays an essential role in the late steps of ribosome biogenesis. The sequence is that of GTPase Der from Tolumonas auensis (strain DSM 9187 / NBRC 110442 / TA 4).